A 439-amino-acid polypeptide reads, in one-letter code: GTPase Der (439 aa).

2 consecutive EngA-type G domains span residues 4–169 (AMVA…PEND) and 177–352 (IKIA…EEYN). GTP contacts are provided by residues 10–17 (GRPNVGKS), 57–61 (DTGGL), 120–123 (NKVD), 183–190 (GRPNVGKS), 230–234 (DTAGI), and 295–298 (NKWD). In terms of domain architecture, KH-like spans 353-437 (KRITTGLLNN…PIVISTKKRG (85 aa)).

This sequence belongs to the TRAFAC class TrmE-Era-EngA-EngB-Septin-like GTPase superfamily. EngA (Der) GTPase family. In terms of assembly, associates with the 50S ribosomal subunit.

Its function is as follows. GTPase that plays an essential role in the late steps of ribosome biogenesis. The chain is GTPase Der from Caldanaerobacter subterraneus subsp. tengcongensis (strain DSM 15242 / JCM 11007 / NBRC 100824 / MB4) (Thermoanaerobacter tengcongensis).